Consider the following 120-residue polypeptide: NAD(P)H-quinone oxidoreductase subunit 3, chloroplastic (120 aa).

The next 3 membrane-spanning stretches (helical) occupy residues 9–29, 64–84, and 88–108; these read IFWA…LISG, MFAL…PWAM, and VLGV…ILGL.

It belongs to the complex I subunit 3 family. In terms of assembly, NDH is composed of at least 16 different subunits, 5 of which are encoded in the nucleus.

It is found in the plastid. Its subcellular location is the chloroplast thylakoid membrane. The enzyme catalyses a plastoquinone + NADH + (n+1) H(+)(in) = a plastoquinol + NAD(+) + n H(+)(out). It catalyses the reaction a plastoquinone + NADPH + (n+1) H(+)(in) = a plastoquinol + NADP(+) + n H(+)(out). NDH shuttles electrons from NAD(P)H:plastoquinone, via FMN and iron-sulfur (Fe-S) centers, to quinones in the photosynthetic chain and possibly in a chloroplast respiratory chain. The immediate electron acceptor for the enzyme in this species is believed to be plastoquinone. Couples the redox reaction to proton translocation, and thus conserves the redox energy in a proton gradient. In Arabis hirsuta (Hairy rock-cress), this protein is NAD(P)H-quinone oxidoreductase subunit 3, chloroplastic.